The following is a 97-amino-acid chain: NADH-ubiquinone oxidoreductase chain 4L (97 aa).

3 consecutive transmembrane segments (helical) span residues 1 to 21, 23 to 43, and 60 to 80; these read MALL…ILLN, LHFL…FIGI, and LLLL…MVAL.

It belongs to the complex I subunit 4L family.

It localises to the mitochondrion membrane. It carries out the reaction a ubiquinone + NADH + 5 H(+)(in) = a ubiquinol + NAD(+) + 4 H(+)(out). In terms of biological role, core subunit of the mitochondrial membrane respiratory chain NADH dehydrogenase (Complex I) that is believed to belong to the minimal assembly required for catalysis. Complex I functions in the transfer of electrons from NADH to the respiratory chain. The immediate electron acceptor for the enzyme is believed to be ubiquinone. The protein is NADH-ubiquinone oxidoreductase chain 4L (ND4L) of Paracentrotus lividus (Common sea urchin).